The following is a 38-amino-acid chain: Photosystem II reaction center protein L (38 aa).

The chain crosses the membrane as a helical span at residues 17 to 37; the sequence is SLYWGLLCIFVLAILFSSYFF.

It belongs to the PsbL family. PSII is composed of 1 copy each of membrane proteins PsbA, PsbB, PsbC, PsbD, PsbE, PsbF, PsbH, PsbI, PsbJ, PsbK, PsbL, PsbM, PsbT, PsbX, PsbY, PsbZ, Psb30/Ycf12, at least 3 peripheral proteins of the oxygen-evolving complex and a large number of cofactors. It forms dimeric complexes.

It localises to the plastid. Its subcellular location is the chloroplast thylakoid membrane. Functionally, one of the components of the core complex of photosystem II (PSII). PSII is a light-driven water:plastoquinone oxidoreductase that uses light energy to abstract electrons from H(2)O, generating O(2) and a proton gradient subsequently used for ATP formation. It consists of a core antenna complex that captures photons, and an electron transfer chain that converts photonic excitation into a charge separation. This subunit is found at the monomer-monomer interface and is required for correct PSII assembly and/or dimerization. The sequence is that of Photosystem II reaction center protein L from Cyanidioschyzon merolae (strain NIES-3377 / 10D) (Unicellular red alga).